The sequence spans 122 residues: Small ribosomal subunit protein uS12c (122 aa).

It belongs to the universal ribosomal protein uS12 family. As to quaternary structure, part of the 30S ribosomal subunit.

It is found in the plastid. It localises to the chloroplast. Its function is as follows. With S4 and S5 plays an important role in translational accuracy. Located at the interface of the 30S and 50S subunits. The polypeptide is Small ribosomal subunit protein uS12c (rps12) (Cyanidioschyzon merolae (strain NIES-3377 / 10D) (Unicellular red alga)).